Here is a 259-residue protein sequence, read N- to C-terminus: Deoxyribose-phosphate aldolase (259 aa).

Aspartate 102 serves as the catalytic Proton donor/acceptor. Lysine 167 serves as the catalytic Schiff-base intermediate with acetaldehyde. The Proton donor/acceptor role is filled by lysine 201.

Belongs to the DeoC/FbaB aldolase family. DeoC type 2 subfamily.

The protein resides in the cytoplasm. It carries out the reaction 2-deoxy-D-ribose 5-phosphate = D-glyceraldehyde 3-phosphate + acetaldehyde. It functions in the pathway carbohydrate degradation; 2-deoxy-D-ribose 1-phosphate degradation; D-glyceraldehyde 3-phosphate and acetaldehyde from 2-deoxy-alpha-D-ribose 1-phosphate: step 2/2. In terms of biological role, catalyzes a reversible aldol reaction between acetaldehyde and D-glyceraldehyde 3-phosphate to generate 2-deoxy-D-ribose 5-phosphate. In Proteus mirabilis (strain HI4320), this protein is Deoxyribose-phosphate aldolase.